A 192-amino-acid chain; its full sequence is uncharacterized protein (192 aa).

In terms of domain architecture, Nudix hydrolase spans 29–160 (QRQAAVLVPI…PLDIHRRGND (132 aa)). The short motif at 67-89 (GAVDNTDATLIAAALREAQEEVA) is the Nudix box element. Residues E83 and E87 each contribute to the Mg(2+) site.

It belongs to the Nudix hydrolase family. PCD1 subfamily. The cofactor is Mn(2+). Mg(2+) serves as cofactor.

In terms of biological role, probably mediates the hydrolysis of some nucleoside diphosphate derivatives. This is an uncharacterized protein from Klebsiella pneumoniae (strain 342).